The following is a 146-amino-acid chain: MIF-like protein mif-3 (146 aa).

The protein belongs to the MIF family.

This Caenorhabditis elegans protein is MIF-like protein mif-3 (mif-3).